Reading from the N-terminus, the 327-residue chain is Biotin synthase (327 aa).

In terms of domain architecture, Radical SAM core spans 49 to 275 (RFGREVSLCS…VNPHAEVRMA (227 aa)). 3 residues coordinate [4Fe-4S] cluster: C67, C71, and C74. The [2Fe-2S] cluster site is built by S112, C143, C203, and R273.

The protein belongs to the radical SAM superfamily. Biotin synthase family. In terms of assembly, homodimer. [4Fe-4S] cluster serves as cofactor. [2Fe-2S] cluster is required as a cofactor.

It carries out the reaction (4R,5S)-dethiobiotin + (sulfur carrier)-SH + 2 reduced [2Fe-2S]-[ferredoxin] + 2 S-adenosyl-L-methionine = (sulfur carrier)-H + biotin + 2 5'-deoxyadenosine + 2 L-methionine + 2 oxidized [2Fe-2S]-[ferredoxin]. It participates in cofactor biosynthesis; biotin biosynthesis; biotin from 7,8-diaminononanoate: step 2/2. In terms of biological role, catalyzes the conversion of dethiobiotin (DTB) to biotin by the insertion of a sulfur atom into dethiobiotin via a radical-based mechanism. The polypeptide is Biotin synthase (Maridesulfovibrio salexigens (strain ATCC 14822 / DSM 2638 / NCIMB 8403 / VKM B-1763) (Desulfovibrio salexigens)).